The chain runs to 385 residues: MKNISILGATGSIGTQTLDVIRNDSEAFKLLAVSAHSNFKKMIEIIDEFKPELVVMVDKLAYNKVLDYCCEKKLKTSVKVGYEAFNEVASYKDSNIVVTSIVGMIGLIPTLEAIKAGKDIALANKETLVVAGELVTKEAKKYGVNILPVDSEHGAIFQCLQGNKYKDINKILLTASGGPFRGKSFDELNNVTLNDALNHPKWTMGRKITIDSATLMNKGLEVIEAHWLFNVDYEKIQVLVHPQSIVHSMVQYKDGSVIAQLGPTDMRLPIQYALNYPVRKERIVEPVDFYSTPDLHFEKPDMDTFRCLRLAYDAGMAGGIMPAILNSANEYAVDLFLKDKIKFTNIQEIIEDALNHFENVNNLTANTIINKSNEVTKYLKGKIGF.

The NADPH site is built by Thr10, Gly11, Ser12, Ile13, Asn38, and Asn124. 1-deoxy-D-xylulose 5-phosphate is bound at residue Lys125. NADPH is bound at residue Glu126. A Mn(2+)-binding site is contributed by Asp150. Residues Ser151, Glu152, Ser176, and His199 each contribute to the 1-deoxy-D-xylulose 5-phosphate site. Residue Glu152 participates in Mn(2+) binding. Gly205 provides a ligand contact to NADPH. 1-deoxy-D-xylulose 5-phosphate contacts are provided by Ser212, Asn217, Lys218, and Glu221. Residue Glu221 coordinates Mn(2+).

Belongs to the DXR family. The cofactor is Mg(2+). Requires Mn(2+) as cofactor.

It carries out the reaction 2-C-methyl-D-erythritol 4-phosphate + NADP(+) = 1-deoxy-D-xylulose 5-phosphate + NADPH + H(+). It functions in the pathway isoprenoid biosynthesis; isopentenyl diphosphate biosynthesis via DXP pathway; isopentenyl diphosphate from 1-deoxy-D-xylulose 5-phosphate: step 1/6. Its function is as follows. Catalyzes the NADPH-dependent rearrangement and reduction of 1-deoxy-D-xylulose-5-phosphate (DXP) to 2-C-methyl-D-erythritol 4-phosphate (MEP). This chain is 1-deoxy-D-xylulose 5-phosphate reductoisomerase, found in Clostridium acetobutylicum (strain ATCC 824 / DSM 792 / JCM 1419 / IAM 19013 / LMG 5710 / NBRC 13948 / NRRL B-527 / VKM B-1787 / 2291 / W).